Consider the following 292-residue polypeptide: 4-hydroxy-tetrahydrodipicolinate synthase (292 aa).

Thr46 serves as a coordination point for pyruvate. Tyr134 serves as the catalytic Proton donor/acceptor. The Schiff-base intermediate with substrate role is filled by Lys162. Residue Ile204 coordinates pyruvate.

This sequence belongs to the DapA family. In terms of assembly, homotetramer; dimer of dimers.

The protein resides in the cytoplasm. The catalysed reaction is L-aspartate 4-semialdehyde + pyruvate = (2S,4S)-4-hydroxy-2,3,4,5-tetrahydrodipicolinate + H2O + H(+). It participates in amino-acid biosynthesis; L-lysine biosynthesis via DAP pathway; (S)-tetrahydrodipicolinate from L-aspartate: step 3/4. Catalyzes the condensation of (S)-aspartate-beta-semialdehyde [(S)-ASA] and pyruvate to 4-hydroxy-tetrahydrodipicolinate (HTPA). In Moorella thermoacetica (strain ATCC 39073 / JCM 9320), this protein is 4-hydroxy-tetrahydrodipicolinate synthase.